Reading from the N-terminus, the 197-residue chain is Proteasome subunit beta 1 (197 aa).

The propeptide at 1–6 (MNRKTG) is removed in mature form; by autocatalysis. Residue threonine 7 is the Nucleophile of the active site.

The protein belongs to the peptidase T1B family. As to quaternary structure, the 20S proteasome core is composed of 14 alpha and 14 beta subunits that assemble into four stacked heptameric rings, resulting in a barrel-shaped structure. The two inner rings, each composed of seven catalytic beta subunits, are sandwiched by two outer rings, each composed of seven alpha subunits. The catalytic chamber with the active sites is on the inside of the barrel. Has a gated structure, the ends of the cylinder being occluded by the N-termini of the alpha-subunits. Is capped at one or both ends by the proteasome regulatory ATPase, PAN.

It localises to the cytoplasm. The catalysed reaction is Cleavage of peptide bonds with very broad specificity.. Its activity is regulated as follows. The formation of the proteasomal ATPase PAN-20S proteasome complex, via the docking of the C-termini of PAN into the intersubunit pockets in the alpha-rings, triggers opening of the gate for substrate entry. Interconversion between the open-gate and close-gate conformations leads to a dynamic regulation of the 20S proteasome proteolysis activity. In terms of biological role, component of the proteasome core, a large protease complex with broad specificity involved in protein degradation. In Pyrococcus abyssi (strain GE5 / Orsay), this protein is Proteasome subunit beta 1.